The following is a 140-amino-acid chain: HTH-type transcriptional regulator AdhR (140 aa).

In terms of domain architecture, HTH merR-type spans 1-69; sequence MNIAQVAKQF…IEALIEYTTL (69 aa). Positions 3-22 form a DNA-binding region, H-T-H motif; it reads IAQVAKQFGLTAATLRYYER. Residues 75–125 are a coiled coil; the sequence is RTVEARKNILADERQRLIEKRKEIDETIKRLDTKIKDYDGKLRENEAKLKS. The disordered stretch occupies residues 120 to 140; the sequence is EAKLKSRPKTESLHGSVEQRR.

Functionally, transcriptional regulator involved in the response to aldehyde stress. Binds to the promoter region of the adhA-yraA operon, the yraC and its own promoter region; binding is unchanged in the presence of aldehydes. The polypeptide is HTH-type transcriptional regulator AdhR (adhR) (Bacillus subtilis (strain 168)).